Consider the following 296-residue polypeptide: Light-independent protochlorophyllide reductase iron-sulfur ATP-binding protein (296 aa).

Residues 10-15 (GIGKST) and lysine 39 each bind ATP. Serine 14 is a Mg(2+) binding site. Residues cysteine 95 and cysteine 129 each contribute to the [4Fe-4S] cluster site. 180–181 (NR) is an ATP binding site.

Belongs to the NifH/BchL/ChlL family. As to quaternary structure, homodimer. Protochlorophyllide reductase is composed of three subunits; ChlL, ChlN and ChlB. It depends on [4Fe-4S] cluster as a cofactor.

The protein resides in the plastid. It localises to the chloroplast. It carries out the reaction chlorophyllide a + oxidized 2[4Fe-4S]-[ferredoxin] + 2 ADP + 2 phosphate = protochlorophyllide a + reduced 2[4Fe-4S]-[ferredoxin] + 2 ATP + 2 H2O. The protein operates within porphyrin-containing compound metabolism; chlorophyll biosynthesis (light-independent). Functionally, component of the dark-operative protochlorophyllide reductase (DPOR) that uses Mg-ATP and reduced ferredoxin to reduce ring D of protochlorophyllide (Pchlide) to form chlorophyllide a (Chlide). This reaction is light-independent. The L component serves as a unique electron donor to the NB-component of the complex, and binds Mg-ATP. This is Light-independent protochlorophyllide reductase iron-sulfur ATP-binding protein from Chlorokybus atmophyticus (Soil alga).